Here is a 375-residue protein sequence, read N- to C-terminus: Carbamoyl phosphate synthase small chain (375 aa).

Residues 1-184 form a CPSase region; the sequence is MVSLYLENGL…LDYKPFDEKI (184 aa). Residues Ser-44, Gly-240, and Gly-242 each coordinate L-glutamine. One can recognise a Glutamine amidotransferase type-1 domain in the interval 188–375; the sequence is IIAVLDFGAK…KEFVGLLEGF (188 aa). The active-site Nucleophile is Cys-268. L-glutamine-binding residues include Leu-269, Gln-272, Asn-310, and Tyr-313. Residues His-351 and Glu-353 contribute to the active site.

This sequence belongs to the CarA family. As to quaternary structure, composed of two chains; the small (or glutamine) chain promotes the hydrolysis of glutamine to ammonia, which is used by the large (or ammonia) chain to synthesize carbamoyl phosphate. Tetramer of heterodimers (alpha,beta)4.

The enzyme catalyses hydrogencarbonate + L-glutamine + 2 ATP + H2O = carbamoyl phosphate + L-glutamate + 2 ADP + phosphate + 2 H(+). It carries out the reaction L-glutamine + H2O = L-glutamate + NH4(+). The protein operates within amino-acid biosynthesis; L-arginine biosynthesis; carbamoyl phosphate from bicarbonate: step 1/1. It functions in the pathway pyrimidine metabolism; UMP biosynthesis via de novo pathway; (S)-dihydroorotate from bicarbonate: step 1/3. Functionally, small subunit of the glutamine-dependent carbamoyl phosphate synthetase (CPSase). CPSase catalyzes the formation of carbamoyl phosphate from the ammonia moiety of glutamine, carbonate, and phosphate donated by ATP, constituting the first step of 2 biosynthetic pathways, one leading to arginine and/or urea and the other to pyrimidine nucleotides. The small subunit (glutamine amidotransferase) binds and cleaves glutamine to supply the large subunit with the substrate ammonia. The chain is Carbamoyl phosphate synthase small chain from Helicobacter pylori (strain J99 / ATCC 700824) (Campylobacter pylori J99).